The primary structure comprises 328 residues: Protein FAM76B (328 aa).

The tract at residues 143 to 232 (KEQRKGLGSS…ITQSMDSGGT (90 aa)) is disordered. Residues 148–159 (GLGSSHSNSSSL) are compositionally biased toward low complexity. The segment covering 165 to 183 (QRHHHHHQHHRHGSSHHKI) has biased composition (basic residues). The span at 185–201 (GNLSPEQDQGLWKQSIQ) shows a compositional bias: polar residues. Position 188 is a phosphoserine (Ser188). Over residues 203-213 (ETPKKKPKLET) the composition is skewed to basic and acidic residues. Positions 216 to 232 (SNGDSSSITQSMDSGGT) are enriched in polar residues. Residues 237–316 (LISQLKEEVM…KQVAALSKGK (80 aa)) are a coiled coil.

This sequence belongs to the FAM76 family. As to expression, highly expressed in hematopoietic and immune systems including in the thymus, spleen, kidney, and blood vessel.

Plays a role in hematopoiesis and immune system development, and participates in the inflammatory response. This Danio rerio (Zebrafish) protein is Protein FAM76B (fam76b).